A 281-amino-acid chain; its full sequence is Sulfur carrier protein FdhD (281 aa).

Residue Cys-127 is the Cysteine persulfide intermediate of the active site. Phe-264 to Arg-269 contributes to the Mo-bis(molybdopterin guanine dinucleotide) binding site.

The protein belongs to the FdhD family.

The protein resides in the cytoplasm. In terms of biological role, required for formate dehydrogenase (FDH) activity. Acts as a sulfur carrier protein that transfers sulfur from IscS to the molybdenum cofactor prior to its insertion into FDH. The chain is Sulfur carrier protein FdhD from Mannheimia succiniciproducens (strain KCTC 0769BP / MBEL55E).